Here is a 582-residue protein sequence, read N- to C-terminus: Dihydroxy-acid dehydratase 3 (582 aa).

[2Fe-2S] cluster is bound at residue Cys67. Asp99 lines the Mg(2+) pocket. A [2Fe-2S] cluster-binding site is contributed by Cys140. Positions 141 and 142 each coordinate Mg(2+). Residue Lys142 is modified to N6-carboxylysine. Cys212 provides a ligand contact to [2Fe-2S] cluster. Mg(2+) is bound at residue Glu462. Residue Ser488 is the Proton acceptor of the active site.

It belongs to the IlvD/Edd family. Homodimer. The cofactor is [2Fe-2S] cluster. It depends on Mg(2+) as a cofactor.

It carries out the reaction (2R)-2,3-dihydroxy-3-methylbutanoate = 3-methyl-2-oxobutanoate + H2O. The enzyme catalyses (2R,3R)-2,3-dihydroxy-3-methylpentanoate = (S)-3-methyl-2-oxopentanoate + H2O. It participates in amino-acid biosynthesis; L-isoleucine biosynthesis; L-isoleucine from 2-oxobutanoate: step 3/4. It functions in the pathway amino-acid biosynthesis; L-valine biosynthesis; L-valine from pyruvate: step 3/4. In terms of biological role, functions in the biosynthesis of branched-chain amino acids. Catalyzes the dehydration of (2R,3R)-2,3-dihydroxy-3-methylpentanoate (2,3-dihydroxy-3-methylvalerate) into 2-oxo-3-methylpentanoate (2-oxo-3-methylvalerate) and of (2R)-2,3-dihydroxy-3-methylbutanoate (2,3-dihydroxyisovalerate) into 2-oxo-3-methylbutanoate (2-oxoisovalerate), the penultimate precursor to L-isoleucine and L-valine, respectively. The sequence is that of Dihydroxy-acid dehydratase 3 from Bradyrhizobium diazoefficiens (strain JCM 10833 / BCRC 13528 / IAM 13628 / NBRC 14792 / USDA 110).